The chain runs to 282 residues: Undecaprenyl-diphosphatase (282 aa).

The next 6 helical transmembrane spans lie at 90 to 110 (YRLG…GLLF), 121 to 141 (LWVV…AEYL), 165 to 185 (LALV…LFLG), 194 to 214 (FGFL…LPDA), 228 to 248 (QLLV…SWFL), and 256 to 276 (MYWF…LLAT).

It belongs to the UppP family.

It is found in the cell membrane. It catalyses the reaction di-trans,octa-cis-undecaprenyl diphosphate + H2O = di-trans,octa-cis-undecaprenyl phosphate + phosphate + H(+). Its function is as follows. Catalyzes the dephosphorylation of undecaprenyl diphosphate (UPP). Confers resistance to bacitracin. The protein is Undecaprenyl-diphosphatase of Mycobacterium marinum (strain ATCC BAA-535 / M).